The chain runs to 205 residues: DUF724 domain-containing protein 4 (205 aa).

The segment at 28-59 (DASGRGKRRRVEQEHHSDLNNETAAPTGGSAG) is disordered. Residues 63–189 (VLPFTKTLAS…MADDYSKLKK (127 aa)) form the DUF724 domain.

Expressed in roots, leaves, stems, flowers and siliques.

The protein resides in the nucleus. Functionally, may be involved in the polar growth of plant cells via transportation of RNAs. This chain is DUF724 domain-containing protein 4, found in Arabidopsis thaliana (Mouse-ear cress).